A 579-amino-acid chain; its full sequence is Fatty-acid amide hydrolase 1 (579 aa).

Residues A9 to L29 form a helical membrane-spanning segment. The Cytoplasmic segment spans residues R30–D403. The Charge relay system role is filled by K142. Substrate is bound by residues M191, S217, and I238–S241. The Charge relay system role is filled by S217. S241 serves as the catalytic Acyl-ester intermediate. S241 carries the phosphoserine modification. The stretch at L404–L433 is an intramembrane region. The Cytoplasmic portion of the chain corresponds to S434–S579.

This sequence belongs to the amidase family. As to quaternary structure, homodimer.

The protein localises to the endoplasmic reticulum membrane. Its subcellular location is the golgi apparatus membrane. It catalyses the reaction N-(5Z,8Z,11Z,14Z-eicosatetraenoyl)-ethanolamine + H2O = ethanolamine + (5Z,8Z,11Z,14Z)-eicosatetraenoate. The catalysed reaction is (9Z)-octadecenamide + H2O = (9Z)-octadecenoate + NH4(+). It carries out the reaction 2-(5Z,8Z,11Z,14Z-eicosatetraenoyl)-glycerol + H2O = glycerol + (5Z,8Z,11Z,14Z)-eicosatetraenoate + H(+). The enzyme catalyses 1-O-methyl-(5Z,8Z,11Z,14Z)-eicosatetraenoate + H2O = methanol + (5Z,8Z,11Z,14Z)-eicosatetraenoate + H(+). It catalyses the reaction (9Z,12Z,15Z)-octadecatrienamide + H2O = (9Z,12Z,15Z)-octadecatrienoate + NH4(+). The catalysed reaction is (5Z,8Z,11Z,14Z)-eicosatetraenamide + H2O = (5Z,8Z,11Z,14Z)-eicosatetraenoate + NH4(+). It carries out the reaction (6Z)-octadecenamide + H2O = (6Z)-octadecenoate + NH4(+). The enzyme catalyses (15Z)-tetracosenamide + H2O = (15Z)-tetracosenoate + NH4(+). It catalyses the reaction (8Z,11Z,14Z)-eicosatrienamide + H2O = (8Z,11Z,14Z)-eicosatrienoate + NH4(+). The catalysed reaction is (11Z,14Z,17Z)-eicosatrienamide + H2O = (11Z,14Z,17Z)-eicosatrienoate + NH4(+). It carries out the reaction (11Z,14Z)-eicosadienamide + H2O = (11Z,14Z)-eicosadienoate + NH4(+). The enzyme catalyses (9Z,12Z)-octadecadienamide + H2O = (9Z,12Z)-octadecadienoate + NH4(+). It catalyses the reaction tetradecamide + H2O = tetradecanoate + NH4(+). The catalysed reaction is N-(9Z-octadecenoyl) ethanolamine + H2O = ethanolamine + (9Z)-octadecenoate. It carries out the reaction N-(9Z-octadecenoyl)-taurine + H2O = taurine + (9Z)-octadecenoate. The enzyme catalyses (11Z)-eicosenamide + H2O = (11Z)-eicosenoate + NH4(+). It catalyses the reaction N-(9Z-hexadecenoyl) ethanolamine + H2O = (9Z)-hexadecenoate + ethanolamine. The catalysed reaction is N-octadecanoyl ethanolamine + H2O = octadecanoate + ethanolamine. It carries out the reaction N-docosanoyl-ethanolamine + H2O = docosanoate + ethanolamine. The enzyme catalyses N-tetracosanoyl-taurine + H2O = tetracosanoate + taurine. It catalyses the reaction N-(15Z-tetracosenoyl)-ethanolamine + H2O = (15Z)-tetracosenoate + ethanolamine. The catalysed reaction is N-docosanoyl-taurine + H2O = docosanoate + taurine. It carries out the reaction N-(15Z-tetracosenoyl)-taurine + H2O = (15Z)-tetracosenoate + taurine. The enzyme catalyses N-tricosanoyl-taurine + H2O = tricosanoate + taurine. It catalyses the reaction (9Z)-octadecenoate + glycine = N-(9Z-octadecenoyl)glycine + H2O. The catalysed reaction is N-(5Z,8Z,11Z,14Z)-eicosatetraenoyl-glycine + H2O = (5Z,8Z,11Z,14Z)-eicosatetraenoate + glycine. It carries out the reaction N-(5Z,8Z,11Z,14Z-eicosatetraenoyl)-L-serine + H2O = (5Z,8Z,11Z,14Z)-eicosatetraenoate + L-serine. Inhibited by trifluoromethyl ketone. Catalyzes the hydrolysis of endogenous amidated lipids like the sleep-inducing lipid oleamide ((9Z)-octadecenamide), the endocannabinoid anandamide (N-(5Z,8Z,11Z,14Z-eicosatetraenoyl)-ethanolamine), as well as other fatty amides, to their corresponding fatty acids, thereby regulating the signaling functions of these molecules. Also catalyzes the hydrolysis of the endocannabinoid 2-arachidonoylglycerol (2-(5Z,8Z,11Z,14Z-eicosatetraenoyl)-glycerol). FAAH cooperates with PM20D1 in the hydrolysis of amino acid-conjugated fatty acids such as N-fatty acyl glycine and N-fatty acyl-L-serine, thereby acting as a physiological regulator of specific subsets of intracellular, but not of extracellular, N-fatty acyl amino acids. This Sus scrofa (Pig) protein is Fatty-acid amide hydrolase 1 (FAAH).